We begin with the raw amino-acid sequence, 211 residues long: Thiamine-phosphate synthase (211 aa).

Residues 37 to 41 and Asn-69 contribute to the 4-amino-2-methyl-5-(diphosphooxymethyl)pyrimidine site; that span reads QYRDK. Positions 70 and 89 each coordinate Mg(2+). Ser-108 contacts 4-amino-2-methyl-5-(diphosphooxymethyl)pyrimidine. Position 135–137 (135–137) interacts with 2-[(2R,5Z)-2-carboxy-4-methylthiazol-5(2H)-ylidene]ethyl phosphate; sequence SPT. Position 138 (Lys-138) interacts with 4-amino-2-methyl-5-(diphosphooxymethyl)pyrimidine. 2-[(2R,5Z)-2-carboxy-4-methylthiazol-5(2H)-ylidene]ethyl phosphate-binding positions include Gly-165 and 185–186; that span reads LS.

It belongs to the thiamine-phosphate synthase family. Mg(2+) serves as cofactor.

The enzyme catalyses 2-[(2R,5Z)-2-carboxy-4-methylthiazol-5(2H)-ylidene]ethyl phosphate + 4-amino-2-methyl-5-(diphosphooxymethyl)pyrimidine + 2 H(+) = thiamine phosphate + CO2 + diphosphate. It carries out the reaction 2-(2-carboxy-4-methylthiazol-5-yl)ethyl phosphate + 4-amino-2-methyl-5-(diphosphooxymethyl)pyrimidine + 2 H(+) = thiamine phosphate + CO2 + diphosphate. It catalyses the reaction 4-methyl-5-(2-phosphooxyethyl)-thiazole + 4-amino-2-methyl-5-(diphosphooxymethyl)pyrimidine + H(+) = thiamine phosphate + diphosphate. Its pathway is cofactor biosynthesis; thiamine diphosphate biosynthesis; thiamine phosphate from 4-amino-2-methyl-5-diphosphomethylpyrimidine and 4-methyl-5-(2-phosphoethyl)-thiazole: step 1/1. Condenses 4-methyl-5-(beta-hydroxyethyl)thiazole monophosphate (THZ-P) and 2-methyl-4-amino-5-hydroxymethyl pyrimidine pyrophosphate (HMP-PP) to form thiamine monophosphate (TMP). The polypeptide is Thiamine-phosphate synthase (Thiobacillus denitrificans (strain ATCC 25259 / T1)).